The chain runs to 377 residues: NADP-dependent oxidoreductase lnbE (377 aa).

NADP(+) is bound by residues 170–173 (GGNG), 257–263 (LTNPRVS), and 293–295 (SPV).

The protein belongs to the NADP-dependent oxidoreductase L4BD family.

It participates in secondary metabolite biosynthesis. Its function is as follows. NADP-dependent oxidoreductase; part of the lnb gene cluster that mediates the biosynthesis of diastereomeric piperazines. Lna and lnb clusters encode sets of enzymes that produce overlapping sets of previously undescribed metabolites such as piperazinomycin-like metabolites or morpholine. The lna and lnb biosynthetic pathways appear to be part of a signaling network that controls the formation of sclerotia, a resilient overwintering structure. One primary function of the non-canonical nonribosomal peptide synthetases lnaA and lnbA consists in the reduction of L-tyrosine. The presence in the clusters of tailoring enzymes such as the oxidoreductases lnaB, lnbB, lnaE or lnbE, as well as of the cytochrome P450 monooxygenases lnaC, lnaD, or lnbC, might explain formation of various diastereomeric piperazines. This chain is NADP-dependent oxidoreductase lnbE, found in Aspergillus flavus (strain ATCC 200026 / FGSC A1120 / IAM 13836 / NRRL 3357 / JCM 12722 / SRRC 167).